The sequence spans 393 residues: Thermostable carboxypeptidase 2 (393 aa).

Zn(2+) is bound by residues His-104, Asp-109, and His-245. Tyr-302 serves as the catalytic Proton donor. Glu-373 functions as the Nucleophile in the catalytic mechanism.

The protein belongs to the peptidase M20 family. As to quaternary structure, homotetramer. Zn(2+) is required as a cofactor.

Functionally, can release basic, acidic, aromatic, and, to a lesser extent, aliphatic amino acids. The chain is Thermostable carboxypeptidase 2 (cpsA2) from Saccharolobus solfataricus (strain ATCC 35092 / DSM 1617 / JCM 11322 / P2) (Sulfolobus solfataricus).